Reading from the N-terminus, the 207-residue chain is MGTVKITSRYGILLGFIALLCTIISTGIFFLTKDKIDAVIAAQQRELLLQVIPQDYFNNNLLESAVIPQDKNFVGIQKIYFAKKDGNISAYAYETTAPDGYSGDIRLLVGLDPKGEVLGVRVIEHHETPGLGDKIERRISNWILGFTNQSINEHNLSEWAVKKDGGKFDQFSGATITPRAVVNQTKRSALIMLNNQALLQQLSTQVK.

Residues 11–31 form a helical membrane-spanning segment; that stretch reads GILLGFIALLCTIISTGIFFL. T175 is subject to FMN phosphoryl threonine.

The protein belongs to the RnfG family. The complex is composed of six subunits: RnfA, RnfB, RnfC, RnfD, RnfE and RnfG. Requires FMN as cofactor.

Its subcellular location is the cell inner membrane. Part of a membrane-bound complex that couples electron transfer with translocation of ions across the membrane. This Haemophilus influenzae (strain 86-028NP) protein is Ion-translocating oxidoreductase complex subunit G.